The sequence spans 262 residues: F-actin-capping protein subunit alpha (262 aa).

It belongs to the F-actin-capping protein alpha subunit family. Heterodimer of an alpha and a beta subunit.

In terms of biological role, F-actin-capping proteins bind in a Ca(2+)-independent manner to the fast growing ends of actin filaments (barbed end) thereby blocking the exchange of subunits at these ends. Unlike other capping proteins (such as gelsolin and severin), these proteins do not sever actin filaments. This is F-actin-capping protein subunit alpha (CAP1) from Candida glabrata (strain ATCC 2001 / BCRC 20586 / JCM 3761 / NBRC 0622 / NRRL Y-65 / CBS 138) (Yeast).